Reading from the N-terminus, the 505-residue chain is Deoxyguanosinetriphosphate triphosphohydrolase (505 aa).

Positions 66-273 (RLTHSLEVQQ…MEAADDISYC (208 aa)) constitute an HD domain.

It belongs to the dGTPase family. Type 1 subfamily. Homotetramer. The cofactor is Mg(2+).

The catalysed reaction is dGTP + H2O = 2'-deoxyguanosine + triphosphate + H(+). Functionally, dGTPase preferentially hydrolyzes dGTP over the other canonical NTPs. This Yersinia enterocolitica serotype O:8 / biotype 1B (strain NCTC 13174 / 8081) protein is Deoxyguanosinetriphosphate triphosphohydrolase.